Here is a 358-residue protein sequence, read N- to C-terminus: Protein-glutamate methylesterase/protein-glutamine glutaminase (358 aa).

The Response regulatory domain occupies Ser-5–Glu-122. Position 56 is a 4-aspartylphosphate (Asp-56). The region spanning Gly-159–Ala-351 is the CheB-type methylesterase domain. Active-site residues include Ser-171, His-197, and Asp-293.

This sequence belongs to the CheB family. In terms of processing, phosphorylated by CheA. Phosphorylation of the N-terminal regulatory domain activates the methylesterase activity.

Its subcellular location is the cytoplasm. The enzyme catalyses [protein]-L-glutamate 5-O-methyl ester + H2O = L-glutamyl-[protein] + methanol + H(+). It catalyses the reaction L-glutaminyl-[protein] + H2O = L-glutamyl-[protein] + NH4(+). Involved in chemotaxis. Part of a chemotaxis signal transduction system that modulates chemotaxis in response to various stimuli. Catalyzes the demethylation of specific methylglutamate residues introduced into the chemoreceptors (methyl-accepting chemotaxis proteins or MCP) by CheR. Also mediates the irreversible deamidation of specific glutamine residues to glutamic acid. This chain is Protein-glutamate methylesterase/protein-glutamine glutaminase, found in Nitrosomonas europaea (strain ATCC 19718 / CIP 103999 / KCTC 2705 / NBRC 14298).